The following is a 378-amino-acid chain: Protein RecA (378 aa).

79-86 (GPESSGKT) is an ATP binding site.

It belongs to the RecA family.

The protein localises to the cytoplasm. Functionally, can catalyze the hydrolysis of ATP in the presence of single-stranded DNA, the ATP-dependent uptake of single-stranded DNA by duplex DNA, and the ATP-dependent hybridization of homologous single-stranded DNAs. It interacts with LexA causing its activation and leading to its autocatalytic cleavage. The sequence is that of Protein RecA from Streptococcus pyogenes serotype M1.